A 409-amino-acid chain; its full sequence is Lipoyl synthase, mitochondrial (409 aa).

The interval Gln21–Leu41 is disordered. Residues Cys125, Cys130, Cys136, Cys159, Cys163, Cys166, and Ser375 each coordinate [4Fe-4S] cluster. A Radical SAM core domain is found at Glu142–Leu364.

It belongs to the radical SAM superfamily. Lipoyl synthase family. Requires [4Fe-4S] cluster as cofactor.

It localises to the mitochondrion. It catalyses the reaction [[Fe-S] cluster scaffold protein carrying a second [4Fe-4S](2+) cluster] + N(6)-octanoyl-L-lysyl-[protein] + 2 oxidized [2Fe-2S]-[ferredoxin] + 2 S-adenosyl-L-methionine + 4 H(+) = [[Fe-S] cluster scaffold protein] + N(6)-[(R)-dihydrolipoyl]-L-lysyl-[protein] + 4 Fe(3+) + 2 hydrogen sulfide + 2 5'-deoxyadenosine + 2 L-methionine + 2 reduced [2Fe-2S]-[ferredoxin]. It participates in protein modification; protein lipoylation via endogenous pathway; protein N(6)-(lipoyl)lysine from octanoyl-[acyl-carrier-protein]: step 2/2. Catalyzes the radical-mediated insertion of two sulfur atoms into the C-6 and C-8 positions of the octanoyl moiety bound to the lipoyl domains of lipoate-dependent enzymes, thereby converting the octanoylated domains into lipoylated derivatives. The protein is Lipoyl synthase, mitochondrial of Trypanosoma brucei gambiense (strain MHOM/CI/86/DAL972).